We begin with the raw amino-acid sequence, 315 residues long: Leukocidin-S subunit (315 aa).

Residues 1–29 (MLKNKILATTLSVSLLAPLANPLLENAKA) form the signal peptide.

Belongs to the aerolysin family. In terms of assembly, leukocidin consists of two protein components: F and S.

In terms of biological role, leukocidin causes cytotoxic changes in polymorphonuclear leukocytes. This chain is Leukocidin-S subunit (lukS), found in Staphylococcus aureus.